The sequence spans 267 residues: L-aspartate dehydrogenase (267 aa).

NAD(+)-binding residues include alanine 124 and asparagine 190. The active site involves histidine 218.

It belongs to the L-aspartate dehydrogenase family.

The enzyme catalyses L-aspartate + NADP(+) + H2O = oxaloacetate + NH4(+) + NADPH + H(+). The catalysed reaction is L-aspartate + NAD(+) + H2O = oxaloacetate + NH4(+) + NADH + H(+). The protein operates within cofactor biosynthesis; NAD(+) biosynthesis; iminoaspartate from L-aspartate (dehydrogenase route): step 1/1. Functionally, specifically catalyzes the NAD or NADP-dependent dehydrogenation of L-aspartate to iminoaspartate. The polypeptide is L-aspartate dehydrogenase (Methanococcus maripaludis (strain DSM 14266 / JCM 13030 / NBRC 101832 / S2 / LL)).